A 566-amino-acid chain; its full sequence is MKISRQAYADMFGPTVGDKVRLADTELWIEVEKDFTTYGEEVKFGGGKVIRDGMGQGQLLAAEVVDTLITNALIIDHWGIVKADVGIKNGRIAAIGKAGNPDIQPDVTIAVGAATEVIAGEGMILTAGGVDTHIHFICPQQIEEALMSGVTTMIGGGTGPATGTNATTVTPGPWHMARMLQASDSFPMNIGFTGKGNVSLPGPLIEQVKAGAIGLKLHEDWGTTPAAIDNCLSVADEYDVQVAIHTDTLNESGFVETTLAAFKNRTIHTYHTEGAGGGHAPDIIKACGSPNVLPSSTNPTRPFTRNTIDEHLDMLMVCHHLDPSIAEDVAFAESRIRRETIAAEDILHDLGAFSMLSSDSQAMGRVGEVIMRTWQTADKMKKQRGPLPQDGPGNDNFRAKRYIAKYTINPAITHGISHEVGSIEVGKWADLVLWRPAFFGVKPTLILKGGAIAASLMGDANASIPTPQPVHYRPMFASFGSSLHATSLTFISQAAFDAGVPESLGLKKQIGVVKGCRTVQKKDLIHNDYLPDIEVDPQTYQVKADGVLLWCEPADVLPMAQRYFLF.

Residues 128-566 (GGVDTHIHFI…LPMAQRYFLF (439 aa)) enclose the Urease domain. Ni(2+) is bound by residues His133, His135, and Lys216. At Lys216 the chain carries N6-carboxylysine. Substrate is bound at residue His218. His245 and His271 together coordinate Ni(2+). The active-site Proton donor is the His319. Residue Asp359 coordinates Ni(2+).

This sequence belongs to the metallo-dependent hydrolases superfamily. Urease alpha subunit family. As to quaternary structure, may form a heterohexamer of 3 UreC (alpha) and 3 UreAB (gamma/beta) subunits. May also form a heterotrimer of UreA (gamma), UreB (beta) and UreC (alpha) subunits. Three heterotrimers associate to form the active enzyme. Ni cation is required as a cofactor. Post-translationally, carboxylation allows a single lysine to coordinate two nickel ions.

The protein resides in the cytoplasm. It carries out the reaction urea + 2 H2O + H(+) = hydrogencarbonate + 2 NH4(+). It functions in the pathway nitrogen metabolism; urea degradation; CO(2) and NH(3) from urea (urease route): step 1/1. The polypeptide is Urease subunit alpha 2 (Pseudomonas syringae pv. syringae (strain B728a)).